A 180-amino-acid chain; its full sequence is Translation initiation factor IF-3 (180 aa).

This sequence belongs to the IF-3 family. Monomer.

It is found in the cytoplasm. Its function is as follows. IF-3 binds to the 30S ribosomal subunit and shifts the equilibrium between 70S ribosomes and their 50S and 30S subunits in favor of the free subunits, thus enhancing the availability of 30S subunits on which protein synthesis initiation begins. In Klebsiella pneumoniae, this protein is Translation initiation factor IF-3.